Here is a 328-residue protein sequence, read N- to C-terminus: Malate dehydrogenase (328 aa).

Residue 11–17 coordinates NAD(+); it reads GAAGQIG. Substrate contacts are provided by Arg94 and Arg100. Residues Asn107, Gln114, and 131–133 each bind NAD(+); that span reads VGN. Residues Asn133 and Arg164 each coordinate substrate. Residue His189 is the Proton acceptor of the active site.

It belongs to the LDH/MDH superfamily. MDH type 2 family.

It carries out the reaction (S)-malate + NAD(+) = oxaloacetate + NADH + H(+). Functionally, catalyzes the reversible oxidation of malate to oxaloacetate. This is Malate dehydrogenase from Xanthomonas oryzae pv. oryzae (strain PXO99A).